The primary structure comprises 230 residues: Dickkopf-like protein 1 (230 aa).

A signal peptide spans 1-20 (MCRLRVLLLLLPLAFVSSSA). N-linked (GlcNAc...) asparagine glycosylation is found at Asn-31, Asn-87, and Asn-102.

As to quaternary structure, interacts with SLXL1; Co-localize in seminiferous tubules. Interacts with SLY. In terms of processing, N-glycosylated during spermatogenesis. Not N-glycosylated in mature sperm. Testis-specific. Abundant in the seminiferous tubules where it is associated with developing spermatocytes. Expressed only in testis (at protein level). Not detectable on postnatal days 4 and 9 but after day 18 it gradually increased as the development of testes progressed. Expressed at high levels in testis and at weak levels in epididymis.

The protein resides in the secreted. It localises to the cytoplasmic vesicle. It is found in the secretory vesicle. The protein localises to the acrosome. Involved in fertilization by facilitating sperm penetration of the zona pellucida. May promote spermatocyte apoptosis, thereby limiting sperm production. In adults, may reduce testosterone synthesis in Leydig cells. Is not essential either for development or fertility. This chain is Dickkopf-like protein 1, found in Mus musculus (Mouse).